Here is a 376-residue protein sequence, read N- to C-terminus: E3 ubiquitin-protein ligase RNF133 (376 aa).

The PA domain maps to 65–167 (SSTLKRVAGV…LKGTEIFHLI (103 aa)). The chain crosses the membrane as a helical span at residues 190–210 (YLVSFVIVTTATLAYFIFYHI). Residues 256–297 (CVICFEHYKPNDIVRILTCKHFFHKNCIDPWILSHGTCPICK) form an RING-type; atypical zinc finger. Residues 328–376 (TLSPSEEETNNEVSPAGTSDKVIHVEENPTSQNNDSQPHSVVEDVHPSP) form a disordered region. Residues 355–366 (NPTSQNNDSQPH) show a composition bias toward polar residues.

Interacts with E3 ligase UBE2J1. Auto-ubiquitinated.

It is found in the endoplasmic reticulum membrane. It carries out the reaction S-ubiquitinyl-[E2 ubiquitin-conjugating enzyme]-L-cysteine + [acceptor protein]-L-lysine = [E2 ubiquitin-conjugating enzyme]-L-cysteine + N(6)-ubiquitinyl-[acceptor protein]-L-lysine.. Its pathway is protein modification; protein ubiquitination. Its function is as follows. Has E3 ubiquitin-protein ligase activity. Plays a role in male fecundity through the interaction with the E2 ubituitin-protein ligase UBE2J1. The chain is E3 ubiquitin-protein ligase RNF133 (RNF133) from Macaca fascicularis (Crab-eating macaque).